A 237-amino-acid polypeptide reads, in one-letter code: Putative ATP-binding protein BMEII0108 (237 aa).

The region spanning 5 to 205 (ISFNNVVMRY…DLPYPRTEAI (201 aa)) is the ABC transporter domain. Position 37-44 (37-44 (GPSGCGKS)) interacts with ATP.

The protein belongs to the ABC transporter superfamily. In terms of assembly, the complex is composed of two ATP-binding proteins (BMEII0108), two transmembrane proteins (BMEII0107) and a solute-binding protein (BMEII0109).

The protein localises to the cell inner membrane. In terms of biological role, probably part of an ABC transporter complex. Probably Responsible for energy coupling to the transport system. This chain is Putative ATP-binding protein BMEII0108, found in Brucella melitensis biotype 1 (strain ATCC 23456 / CCUG 17765 / NCTC 10094 / 16M).